The chain runs to 125 residues: UPF0102 protein mlr4633 (125 aa).

It belongs to the UPF0102 family.

This is UPF0102 protein mlr4633 from Mesorhizobium japonicum (strain LMG 29417 / CECT 9101 / MAFF 303099) (Mesorhizobium loti (strain MAFF 303099)).